Consider the following 150-residue polypeptide: Transcriptional repressor NrdR (150 aa).

Residues 3–33 (CPFCGGESRVLESRPASDEEAVRRRRECLAC) fold into a zinc finger. The ATP-cone domain maps to 48–138 (LIVVKKDGRR…VYREFKDLNE (91 aa)).

It belongs to the NrdR family. Zn(2+) is required as a cofactor.

Its function is as follows. Negatively regulates transcription of bacterial ribonucleotide reductase nrd genes and operons by binding to NrdR-boxes. The protein is Transcriptional repressor NrdR of Symbiobacterium thermophilum (strain DSM 24528 / JCM 14929 / IAM 14863 / T).